The primary structure comprises 492 residues: GTPase-GDP dissociation stimulator arz1 (492 aa).

It localises to the cytoplasm. It is found in the nucleus. Functionally, probably acts as a GEF (guanine nucleotide exchange factor) for the Rho family of small GTP-binding proteins (G proteins) that stimulates the dissociation of GDP to enable subsequent binding of GTP. May also chaperone the processing and/or trafficking of small GTPases independently of GEF activity. May be involved in the control of polarized cell growth via CDC42-mediated signaling. May also be involved in the control of cell-wall organization via RHO1-mediated signaling. This is GTPase-GDP dissociation stimulator arz1 from Schizosaccharomyces pombe (strain 972 / ATCC 24843) (Fission yeast).